A 300-amino-acid polypeptide reads, in one-letter code: Acetaldehyde dehydrogenase (300 aa).

10 to 13 (SGNI) contacts NAD(+). C129 (acyl-thioester intermediate) is an active-site residue. Residues 160–168 (SAGPGTRKN) and N271 each bind NAD(+).

It belongs to the acetaldehyde dehydrogenase family.

It carries out the reaction acetaldehyde + NAD(+) + CoA = acetyl-CoA + NADH + H(+). In Alkalilimnicola ehrlichii (strain ATCC BAA-1101 / DSM 17681 / MLHE-1), this protein is Acetaldehyde dehydrogenase.